The chain runs to 86 residues: Selenoprotein W (86 aa).

A cross-link (cysteinyl-selenocysteine (Cys-Sec); redox-active) is located at residues C10–U13. A non-standard amino acid (selenocysteine) is located at residue U13.

It belongs to the SelWTH family. Selenoprotein W subfamily.

The protein resides in the cytoplasm. Its function is as follows. Plays a role as a glutathione (GSH)-dependent antioxidant. May be involved in a redox-related process. May play a role in the myopathies of selenium deficiency. The sequence is that of Selenoprotein W from Danio rerio (Zebrafish).